The chain runs to 446 residues: DDB1- and CUL4-associated factor 12 (446 aa).

Positions M1–A12 are enriched in basic residues. The tract at residues M1–R33 is disordered. 4 WD repeats span residues S132–V173, G177–S215, P245–L284, and E333–D370.

This sequence belongs to the WD repeat DCAF12 family. In terms of assembly, component of the DCX(DCAF12) E3 ubiquitin ligase complex, at least composed of cul4 (cul4a or cul4b), ddb1, dcaf12 and rbx1.

The protein localises to the cytoplasm. It is found in the cytoskeleton. It localises to the microtubule organizing center. The protein resides in the centrosome. Its subcellular location is the nucleus. It participates in protein modification; protein ubiquitination. Its function is as follows. Substrate-recognition component of a DCX (DDB1-CUL4-X-box) E3 ubiquitin-protein ligase complex of the DesCEND (destruction via C-end degrons) pathway, which recognizes a C-degron located at the extreme C terminus of target proteins, leading to their ubiquitination and degradation. The C-degron recognized by the DesCEND pathway is usually a motif of less than ten residues and can be present in full-length proteins, truncated proteins or proteolytically cleaved forms. The DCX(DCAF12) complex specifically recognizes proteins with a diglutamate (Glu-Glu) at the C-terminus leading to their ubiquitination and degradation. Also directly recognizes the C-terminal glutamate-leucine (Glu-Leu) degron as an alternative degron in proteins leading to their ubiquitination and degradation. This Xenopus tropicalis (Western clawed frog) protein is DDB1- and CUL4-associated factor 12.